The chain runs to 147 residues: MKVLLIKDVKALGKAGEIKEVKDGYGQNFLIAKGFAKAATNEVLRKYESDKKKEAENLRFEIANLEKLKEELSKITLEISKPVGANGSLFGGVTKDEIAHALKEQSHIEIDKKSLECDTLKSLGIHEVSVKLGHAIHAKFNINIKAE.

Belongs to the bacterial ribosomal protein bL9 family.

Binds to the 23S rRNA. The chain is Large ribosomal subunit protein bL9 from Campylobacter jejuni subsp. jejuni serotype O:2 (strain ATCC 700819 / NCTC 11168).